Reading from the N-terminus, the 560-residue chain is Potassium-transporting ATPase potassium-binding subunit (560 aa).

The next 12 helical transmembrane spans lie at 6 to 26 (FLLIASFLLVLMALAKPLGSL), 63 to 83 (LLAILLFNTLGLVLLFAILMC), 132 to 152 (GLAVQNFLSAATGIAVAFALI), 175 to 195 (LWVLMPISLIIALFFIQQGAI), 250 to 270 (LTNVVQMLAIFLIPAALCFAF), 282 to 302 (AILWTMTVIFVVCVALVMWAE), 327 to 347 (FGILASSLFAVVTTAASCGAV), 356 to 376 (ALGGMIPMWLMQIGEVVFGGV), 379 to 399 (GLYGMLLFVLLGVFIAGLMIG), 416 to 436 (MTALAILVTPALVLLGTALAM), 483 to 503 (LLLAFCMWFGRFLVIIPVMAI), and 524 to 544 (GALFIGLLTGTVLLVGALTFI).

The protein belongs to the KdpA family. As to quaternary structure, the system is composed of three essential subunits: KdpA, KdpB and KdpC.

It localises to the cell inner membrane. Functionally, part of the high-affinity ATP-driven potassium transport (or Kdp) system, which catalyzes the hydrolysis of ATP coupled with the electrogenic transport of potassium into the cytoplasm. This subunit binds the periplasmic potassium ions and delivers the ions to the membrane domain of KdpB through an intramembrane tunnel. In Cronobacter sakazakii (strain ATCC BAA-894) (Enterobacter sakazakii), this protein is Potassium-transporting ATPase potassium-binding subunit.